We begin with the raw amino-acid sequence, 719 residues long: Fatty acid oxidation complex subunit alpha (719 aa).

The interval 1–190 (MVYQGNRITV…KLGLVDATVA (190 aa)) is enoyl-CoA hydratase/isomerase. Substrate is bound at residue D298. The interval 313-719 (HDINEAAVLG…AAGETFYATA (407 aa)) is 3-hydroxyacyl-CoA dehydrogenase. NAD(+)-binding positions include M326, D345, 402–404 (VVE), K409, and S431. H452 serves as the catalytic For 3-hydroxyacyl-CoA dehydrogenase activity. N455 lines the NAD(+) pocket. Substrate is bound at residue N502.

The protein in the N-terminal section; belongs to the enoyl-CoA hydratase/isomerase family. It in the C-terminal section; belongs to the 3-hydroxyacyl-CoA dehydrogenase family. As to quaternary structure, heterotetramer of two alpha chains (FadB) and two beta chains (FadA).

The enzyme catalyses a (3S)-3-hydroxyacyl-CoA + NAD(+) = a 3-oxoacyl-CoA + NADH + H(+). The catalysed reaction is a (3S)-3-hydroxyacyl-CoA = a (2E)-enoyl-CoA + H2O. It carries out the reaction a 4-saturated-(3S)-3-hydroxyacyl-CoA = a (3E)-enoyl-CoA + H2O. It catalyses the reaction (3S)-3-hydroxybutanoyl-CoA = (3R)-3-hydroxybutanoyl-CoA. The enzyme catalyses a (3Z)-enoyl-CoA = a 4-saturated (2E)-enoyl-CoA. The catalysed reaction is a (3E)-enoyl-CoA = a 4-saturated (2E)-enoyl-CoA. Its pathway is lipid metabolism; fatty acid beta-oxidation. In terms of biological role, involved in the aerobic and anaerobic degradation of long-chain fatty acids via beta-oxidation cycle. Catalyzes the formation of 3-oxoacyl-CoA from enoyl-CoA via L-3-hydroxyacyl-CoA. It can also use D-3-hydroxyacyl-CoA and cis-3-enoyl-CoA as substrate. The chain is Fatty acid oxidation complex subunit alpha from Psychrobacter cryohalolentis (strain ATCC BAA-1226 / DSM 17306 / VKM B-2378 / K5).